Here is a 256-residue protein sequence, read N- to C-terminus: Uridylate kinase (256 aa).

Lysine 10 to glycine 13 serves as a coordination point for ATP. Residue glycine 52 participates in UMP binding. 2 residues coordinate ATP: glycine 53 and arginine 57. Residues aspartate 72 and asparagine 134–threonine 141 contribute to the UMP site. ATP-binding residues include tyrosine 168 and aspartate 171.

It belongs to the UMP kinase family. As to quaternary structure, homohexamer.

It localises to the cytoplasm. The catalysed reaction is UMP + ATP = UDP + ADP. The protein operates within pyrimidine metabolism; CTP biosynthesis via de novo pathway; UDP from UMP (UMPK route): step 1/1. Its activity is regulated as follows. Inhibited by UTP. Catalyzes the reversible phosphorylation of UMP to UDP. The chain is Uridylate kinase from Frankia alni (strain DSM 45986 / CECT 9034 / ACN14a).